The chain runs to 239 residues: Flagellin B3 (239 aa).

Positions 1 to 11 are excised as a propeptide; the sequence is MLKNFMKNKKG. Residues N115 and N128 are each glycosylated (N-linked (GlcNAc...) asparagine).

The protein belongs to the archaeal flagellin family. Post-translationally, N-linked glycans consist of the 779 Da trisaccharide beta-ManNAc(Thr)-(1-4)-beta-GlcNAc3NAcA-(1-3)-beta-GlcNAc.

The protein localises to the archaeal flagellum. Flagellin is the subunit protein which polymerizes to form the filaments of archaeal flagella. The sequence is that of Flagellin B3 (flaB3) from Methanococcus voltae.